A 632-amino-acid polypeptide reads, in one-letter code: Palmitoyltransferase ZDHHC17 (632 aa).

Topologically, residues M1–K304 are cytoplasmic. The necessary and sufficient for interaction with DNAJC5 and SNAP25 stretch occupies residues M11 to V305. 7 ANK repeats span residues T51 to P86, E89 to Q118, L123 to L152, E156 to M185, N189 to L219, H224 to A253, and K257 to Y286. A run of 2 helical transmembrane segments spans residues V305–I325 and D326–S346. The Cytoplasmic portion of the chain corresponds to K347 to A357. The helical transmembrane segment at L358–F378 threads the bilayer. Over W379 to D381 the chain is Lumenal. The chain crosses the membrane as a helical span at residues L382–F402. Over G403–R480 the chain is Cytoplasmic. The DHHC domain occupies I437–F487. C467 acts as the S-palmitoyl cysteine intermediate in catalysis. A helical membrane pass occupies residues Y481–I501. The Lumenal portion of the chain corresponds to S502–P529. The chain crosses the membrane as a helical span at residues W530–M550. At C551–V632 the chain is on the cytoplasmic side.

Belongs to the DHHC palmitoyltransferase family. AKR/ZDHHC17 subfamily. Interacts (via ANK repeats) with numerous proteins (via the consensus sequence motif [VIAP]-[VIT]-x-x-Q-P). Interacts (via ANK repeats) with CLIP3. Interacts (via ANK repeats) with HTT; this interaction is inversely correlated to the length of the polyglutamine tract added to the huntingtin protein in Huntington disease. Interacts (via ANK repeats) with DNAJC5 (via C-terminus). Interacts (via ANK repeats) with MAP6. Interacts (via ANK repeats) with SNAP23. Interacts (via ANK repeats) with SNAP25. Interacts (via ANK repeats) with EVL. Interacts with SPRED1 and SPRED3. Interacts with GPM6A and OPTN. May interact (via ANK repeats) with SPRED2. May interact with NTRK1; may regulate its localization and function. Post-translationally, autopalmitoylated. Autopalmitoylation has a regulatory role in ZDHHC17-mediated Mg(2+) transport. As to expression, expressed in all brain regions. Expression is highest in the cortex, cerebellum, occipital lobe and caudate and lowest in the spinal cord. Expression is also seen in testis, pancreas, heart and kidney.

Its subcellular location is the golgi apparatus membrane. The protein localises to the cytoplasmic vesicle membrane. It is found in the presynaptic cell membrane. The catalysed reaction is L-cysteinyl-[protein] + hexadecanoyl-CoA = S-hexadecanoyl-L-cysteinyl-[protein] + CoA. It catalyses the reaction L-cysteinyl-[protein] + tetradecanoyl-CoA = S-tetradecanoyl-L-cysteinyl-[protein] + CoA. It carries out the reaction L-cysteinyl-[protein] + octadecanoyl-CoA = S-octadecanoyl-L-cysteinyl-[protein] + CoA. Functionally, palmitoyltransferase that catalyzes the addition of palmitate onto various protein substrates and is involved in a variety of cellular processes. Has no stringent fatty acid selectivity and in addition to palmitate can also transfer onto target proteins myristate from tetradecanoyl-CoA and stearate from octadecanoyl-CoA. Palmitoyltransferase specific for a subset of neuronal proteins, including SNAP25, DLG4/PSD95, GAD2, SYT1 and HTT. Also palmitoylates neuronal protein GPM6A as well as SPRED1 and SPRED3. Could also play a role in axonogenesis through the regulation of NTRK1 and the downstream ERK1/ERK2 signaling cascade. May be involved in the sorting or targeting of critical proteins involved in the initiating events of endocytosis at the plasma membrane. May play a role in Mg(2+) transport. Could also palmitoylate DNAJC5 and regulate its localization to the Golgi membrane. Palmitoylates CASP6, thereby preventing its dimerization and subsequent activation. This Homo sapiens (Human) protein is Palmitoyltransferase ZDHHC17.